Reading from the N-terminus, the 306-residue chain is Mitochondrial substrate carrier family protein M (306 aa).

At 1-10 (MRYILNNNVE) the chain is on the mitochondrial intermembrane side. Solcar repeat units lie at residues 5-98 (LNNN…YKNI), 108-195 (LNTF…IKFY), and 207-299 (LNAS…IKKS). The helical transmembrane segment at 11–31 (GTSALLGSTVATAFLQPFDFL) threads the bilayer. The Mitochondrial matrix segment spans residues 32 to 72 (KIRLQGSGFASGGDLNKFKRVGVIDTCKNVLKNEGIKQFWR). A helical transmembrane segment spans residues 73-89 (GSSPTIVASGIAWGTYM). The Mitochondrial intermembrane portion of the chain corresponds to 90-113 (HFYEAYKNILKSKYNVTQLNTFDH). A helical membrane pass occupies residues 114-134 (FICAVGASATQVFITNPIFLI). The Mitochondrial matrix portion of the chain corresponds to 135–163 (KTRMQLQTPGSANYYTGIFDGIKKTVKVE). A helical membrane pass occupies residues 164–184 (GFKGLYKGVIPSLWLTFHGGI). Over 185 to 211 (QMSSYEHIKFYFSSNSGKSLDSLNASE) the chain is Mitochondrial intermembrane. A helical transmembrane segment spans residues 212 to 232 (IFIASSISKFLASTILYPFQV). Over 233–278 (VKTRLQDERNIPNQNNVRVYNGTKDVIFKILKNEGIIGFYRGLVPN) the chain is Mitochondrial matrix. The chain crosses the membrane as a helical span at residues 279–296 (TLKVIPNTSITLLLYEEI). Residues 297-306 (KKSFNYIINE) lie on the Mitochondrial intermembrane side of the membrane.

The protein belongs to the mitochondrial carrier (TC 2.A.29) family.

It localises to the mitochondrion inner membrane. Mitochondrial solute carriers shuttle metabolites, nucleotides, and cofactors through the mitochondrial inner membrane. Transports folate across the inner membranes of mitochondria. The sequence is that of Mitochondrial substrate carrier family protein M (mcfM) from Dictyostelium discoideum (Social amoeba).